The primary structure comprises 206 residues: Protein GrpE (206 aa).

Basic and acidic residues predominate over residues 1-17; that stretch reads MSNESIKAEQDLIHEGV. The interval 1-20 is disordered; that stretch reads MSNESIKAEQDLIHEGVESE.

The protein belongs to the GrpE family. Homodimer.

The protein resides in the cytoplasm. Participates actively in the response to hyperosmotic and heat shock by preventing the aggregation of stress-denatured proteins, in association with DnaK and GrpE. It is the nucleotide exchange factor for DnaK and may function as a thermosensor. Unfolded proteins bind initially to DnaJ; upon interaction with the DnaJ-bound protein, DnaK hydrolyzes its bound ATP, resulting in the formation of a stable complex. GrpE releases ADP from DnaK; ATP binding to DnaK triggers the release of the substrate protein, thus completing the reaction cycle. Several rounds of ATP-dependent interactions between DnaJ, DnaK and GrpE are required for fully efficient folding. The protein is Protein GrpE of Shewanella oneidensis (strain ATCC 700550 / JCM 31522 / CIP 106686 / LMG 19005 / NCIMB 14063 / MR-1).